The sequence spans 226 residues: Ribonuclease 3 (226 aa).

In terms of domain architecture, RNase III spans 6-128 (INKLQRKLGY…LIGGVFLDSD (123 aa)). Glu41 lines the Mg(2+) pocket. Asp45 is an active-site residue. Mg(2+) is bound by residues Asp114 and Glu117. Residue Glu117 is part of the active site. Residues 155–225 (DPKTRLQEYL…AEQALIKLGL (71 aa)) form the DRBM domain.

It belongs to the ribonuclease III family. As to quaternary structure, homodimer. Mg(2+) is required as a cofactor.

It localises to the cytoplasm. It carries out the reaction Endonucleolytic cleavage to 5'-phosphomonoester.. Its function is as follows. Digests double-stranded RNA. Involved in the processing of primary rRNA transcript to yield the immediate precursors to the large and small rRNAs (23S and 16S). Processes some mRNAs, and tRNAs when they are encoded in the rRNA operon. Processes pre-crRNA and tracrRNA of type II CRISPR loci if present in the organism. This is Ribonuclease 3 (rnc) from Pantoea ananatis (strain LMG 20103).